Here is a 227-residue protein sequence, read N- to C-terminus: MAYPFELGFQDATSPIMEELLHFHDHTLMIVFLISSLVLYIISLMLTTKLTHTSTMDAQEVETIWTILPAIILILIALPSLRILYMMDEINDPSLTVKTMGHQWYWSYEYTDYEDLNFDSYMIPTSDLNPGELRLLEVDNRVVLPMELPIRMLISSEDVLHSWAVPSLGLKTDAIPGRLNQATLTSTRPGLYYGQCSEICGSNHSFMPIVLELVPLKHFENWSSSML.

Residues 1–14 (MAYPFELGFQDATS) lie on the Mitochondrial intermembrane side of the membrane. The chain crosses the membrane as a helical span at residues 15-45 (PIMEELLHFHDHTLMIVFLISSLVLYIISLM). Over 46–59 (LTTKLTHTSTMDAQ) the chain is Mitochondrial matrix. A helical membrane pass occupies residues 60-87 (EVETIWTILPAIILILIALPSLRILYMM). The Mitochondrial intermembrane portion of the chain corresponds to 88-227 (DEINDPSLTV…HFENWSSSML (140 aa)). Residues histidine 161, cysteine 196, glutamate 198, cysteine 200, histidine 204, and methionine 207 each contribute to the Cu cation site. Glutamate 198 contacts Mg(2+).

The protein belongs to the cytochrome c oxidase subunit 2 family. In terms of assembly, component of the cytochrome c oxidase (complex IV, CIV), a multisubunit enzyme composed of 14 subunits. The complex is composed of a catalytic core of 3 subunits MT-CO1, MT-CO2 and MT-CO3, encoded in the mitochondrial DNA, and 11 supernumerary subunits COX4I, COX5A, COX5B, COX6A, COX6B, COX6C, COX7A, COX7B, COX7C, COX8 and NDUFA4, which are encoded in the nuclear genome. The complex exists as a monomer or a dimer and forms supercomplexes (SCs) in the inner mitochondrial membrane with NADH-ubiquinone oxidoreductase (complex I, CI) and ubiquinol-cytochrome c oxidoreductase (cytochrome b-c1 complex, complex III, CIII), resulting in different assemblies (supercomplex SCI(1)III(2)IV(1) and megacomplex MCI(2)III(2)IV(2)). Found in a complex with TMEM177, COA6, COX18, COX20, SCO1 and SCO2. Interacts with TMEM177 in a COX20-dependent manner. Interacts with COX20. Interacts with COX16. Requires Cu cation as cofactor.

It localises to the mitochondrion inner membrane. It carries out the reaction 4 Fe(II)-[cytochrome c] + O2 + 8 H(+)(in) = 4 Fe(III)-[cytochrome c] + 2 H2O + 4 H(+)(out). Its function is as follows. Component of the cytochrome c oxidase, the last enzyme in the mitochondrial electron transport chain which drives oxidative phosphorylation. The respiratory chain contains 3 multisubunit complexes succinate dehydrogenase (complex II, CII), ubiquinol-cytochrome c oxidoreductase (cytochrome b-c1 complex, complex III, CIII) and cytochrome c oxidase (complex IV, CIV), that cooperate to transfer electrons derived from NADH and succinate to molecular oxygen, creating an electrochemical gradient over the inner membrane that drives transmembrane transport and the ATP synthase. Cytochrome c oxidase is the component of the respiratory chain that catalyzes the reduction of oxygen to water. Electrons originating from reduced cytochrome c in the intermembrane space (IMS) are transferred via the dinuclear copper A center (CU(A)) of subunit 2 and heme A of subunit 1 to the active site in subunit 1, a binuclear center (BNC) formed by heme A3 and copper B (CU(B)). The BNC reduces molecular oxygen to 2 water molecules using 4 electrons from cytochrome c in the IMS and 4 protons from the mitochondrial matrix. This Tamias merriami (Merriam's chipmunk) protein is Cytochrome c oxidase subunit 2 (MT-CO2).